A 257-amino-acid chain; its full sequence is Pyridoxal phosphate homeostasis protein (257 aa).

The residue at position 47 (K47) is an N6-(pyridoxal phosphate)lysine.

This sequence belongs to the pyridoxal phosphate-binding protein YggS/PROSC family.

Its function is as follows. Pyridoxal 5'-phosphate (PLP)-binding protein, which is involved in PLP homeostasis. In Mycobacterium leprae (strain TN), this protein is Pyridoxal phosphate homeostasis protein.